The primary structure comprises 704 residues: Phosphoribosylformylglycinamidine synthase subunit PurL (704 aa).

His-32 is an active-site residue. An ATP-binding site is contributed by Tyr-35. Glu-76 is a Mg(2+) binding site. Residues Ser-77–His-80 and Arg-99 each bind substrate. His-78 (proton acceptor) is an active-site residue. A Mg(2+)-binding site is contributed by Asp-100. Gln-224 is a substrate binding site. Asp-252 contacts Mg(2+). Glu-296 to Gln-298 provides a ligand contact to substrate. ATP-binding residues include Asp-471 and Gly-508. Asn-509 contacts Mg(2+). Ser-511 provides a ligand contact to substrate.

Belongs to the FGAMS family. As to quaternary structure, monomer. Part of the FGAM synthase complex composed of 1 PurL, 1 PurQ and 2 PurS subunits.

The protein resides in the cytoplasm. The enzyme catalyses N(2)-formyl-N(1)-(5-phospho-beta-D-ribosyl)glycinamide + L-glutamine + ATP + H2O = 2-formamido-N(1)-(5-O-phospho-beta-D-ribosyl)acetamidine + L-glutamate + ADP + phosphate + H(+). It participates in purine metabolism; IMP biosynthesis via de novo pathway; 5-amino-1-(5-phospho-D-ribosyl)imidazole from N(2)-formyl-N(1)-(5-phospho-D-ribosyl)glycinamide: step 1/2. Functionally, part of the phosphoribosylformylglycinamidine synthase complex involved in the purines biosynthetic pathway. Catalyzes the ATP-dependent conversion of formylglycinamide ribonucleotide (FGAR) and glutamine to yield formylglycinamidine ribonucleotide (FGAM) and glutamate. The FGAM synthase complex is composed of three subunits. PurQ produces an ammonia molecule by converting glutamine to glutamate. PurL transfers the ammonia molecule to FGAR to form FGAM in an ATP-dependent manner. PurS interacts with PurQ and PurL and is thought to assist in the transfer of the ammonia molecule from PurQ to PurL. In Pyrococcus furiosus (strain ATCC 43587 / DSM 3638 / JCM 8422 / Vc1), this protein is Phosphoribosylformylglycinamidine synthase subunit PurL.